The following is a 126-amino-acid chain: MGKDKNPRRVAENEAMAKTRMLRTSPQKLNLVAQMIRGKKVDKALADLTFSHKRIAVDVKKCLQSAIANAENNHGLDVDELIVAEAWVGKNLTMKRGRPRARGRFGKIIKPFAEITIKVRQVEEQA.

The protein belongs to the universal ribosomal protein uL22 family. In terms of assembly, part of the 50S ribosomal subunit.

Functionally, this protein binds specifically to 23S rRNA; its binding is stimulated by other ribosomal proteins, e.g. L4, L17, and L20. It is important during the early stages of 50S assembly. It makes multiple contacts with different domains of the 23S rRNA in the assembled 50S subunit and ribosome. Its function is as follows. The globular domain of the protein is located near the polypeptide exit tunnel on the outside of the subunit, while an extended beta-hairpin is found that lines the wall of the exit tunnel in the center of the 70S ribosome. This chain is Large ribosomal subunit protein uL22, found in Dinoroseobacter shibae (strain DSM 16493 / NCIMB 14021 / DFL 12).